The primary structure comprises 61 residues: Large ribosomal subunit protein eL37 (61 aa).

Residues cysteine 19, cysteine 22, cysteine 34, and cysteine 37 each coordinate Zn(2+). The C4-type zinc finger occupies 19-37 (CRRCGRNAYNVSKHYCAAC).

It belongs to the eukaryotic ribosomal protein eL37 family. The cofactor is Zn(2+).

Binds to the 23S rRNA. The sequence is that of Large ribosomal subunit protein eL37 (rpl37e) from Saccharolobus solfataricus (strain ATCC 35092 / DSM 1617 / JCM 11322 / P2) (Sulfolobus solfataricus).